The following is a 217-amino-acid chain: MOB kinase activator 3A (217 aa).

Cysteine 83, cysteine 88, histidine 165, and histidine 170 together coordinate Zn(2+).

The protein belongs to the MOB1/phocein family.

Functionally, may regulate the activity of kinases. This Pongo abelii (Sumatran orangutan) protein is MOB kinase activator 3A (MOB3A).